Reading from the N-terminus, the 298-residue chain is ADP/ATP translocase 3 (298 aa).

Methionine 1 is subject to N-acetylmethionine. Topologically, residues methionine 1–serine 7 are mitochondrial intermembrane. Threonine 2 is subject to N-acetylthreonine; in ADP/ATP translocase 3, N-terminally processed. One copy of the Solcar 1 repeat lies at isoleucine 6–isoleucine 98. Residues phenylalanine 8–glutamine 37 traverse the membrane as a helical segment. The Mitochondrial matrix segment spans residues valine 38 to asparagine 74. The residue at position 52 (lysine 52) is an N6,N6,N6-trimethyllysine. The chain crosses the membrane as a helical span at residues leucine 75–phenylalanine 99. Arginine 80 and lysine 92 together coordinate ADP. Over leucine 100–phenylalanine 109 the chain is Mitochondrial intermembrane. At lysine 105 the chain carries N6-acetyllysine. Residues tryptophan 110–phenylalanine 130 form a helical membrane-spanning segment. Solcar repeat units lie at residues arginine 111–methionine 201 and valine 212–valine 297. At valine 131 to asparagine 178 the chain is on the mitochondrial matrix side. The helical transmembrane segment at valine 179 to lysine 199 threads the bilayer. At glycine 200–isoleucine 210 the chain is on the mitochondrial intermembrane side. Residues valine 211 to phenylalanine 231 traverse the membrane as a helical segment. The Mitochondrial matrix segment spans residues aspartate 232 to glycine 273. Arginine 235 lines the ADP pocket. The segment at arginine 235–methionine 240 is important for transport activity. Positions arginine 235 to methionine 240 match the Nucleotide carrier signature motif motif. Lysine 268 bears the N6-acetyllysine mark. Residues alanine 274 to tyrosine 291 form a helical membrane-spanning segment. The Mitochondrial intermembrane segment spans residues aspartate 292 to isoleucine 298.

Belongs to the mitochondrial carrier (TC 2.A.29) family. As to quaternary structure, monomer. Found in a complex with ARL2, ARL2BP and SLC25A6/ANT3. Trimethylated by ANTKMT at Lys-52.

It localises to the mitochondrion inner membrane. Its subcellular location is the membrane. The enzyme catalyses ADP(in) + ATP(out) = ADP(out) + ATP(in). The catalysed reaction is H(+)(in) = H(+)(out). The matrix-open state (m-state) is inhibited by the membrane-permeable bongkrekic acid (BKA). The cytoplasmic-open state (c-state) is inhibited by the membrane-impermeable toxic inhibitor carboxyatractyloside (CATR). Proton transporter activity is inhibited by ADP:ATP antiporter activity. Functionally, ADP:ATP antiporter that mediates import of ADP into the mitochondrial matrix for ATP synthesis, and export of ATP out to fuel the cell. Cycles between the cytoplasmic-open state (c-state) and the matrix-open state (m-state): operates by the alternating access mechanism with a single substrate-binding site intermittently exposed to either the cytosolic (c-state) or matrix (m-state) side of the inner mitochondrial membrane. In addition to its ADP:ATP antiporter activity, also involved in mitochondrial uncoupling and mitochondrial permeability transition pore (mPTP) activity. Plays a role in mitochondrial uncoupling by acting as a proton transporter: proton transport uncouples the proton flows via the electron transport chain and ATP synthase to reduce the efficiency of ATP production and cause mitochondrial thermogenesis. Proton transporter activity is inhibited by ADP:ATP antiporter activity, suggesting that SLC25A6/ANT3 acts as a master regulator of mitochondrial energy output by maintaining a delicate balance between ATP production (ADP:ATP antiporter activity) and thermogenesis (proton transporter activity). Proton transporter activity requires free fatty acids as cofactor, but does not transport it. Also plays a key role in mPTP opening, a non-specific pore that enables free passage of the mitochondrial membranes to solutes of up to 1.5 kDa, and which contributes to cell death. It is however unclear if SLC25A6/ANT3 constitutes a pore-forming component of mPTP or regulates it. The polypeptide is ADP/ATP translocase 3 (Bos taurus (Bovine)).